We begin with the raw amino-acid sequence, 212 residues long: 3-isopropylmalate dehydratase small subunit 1 (212 aa).

Belongs to the LeuD family. LeuD type 1 subfamily. In terms of assembly, heterodimer of LeuC and LeuD.

The catalysed reaction is (2R,3S)-3-isopropylmalate = (2S)-2-isopropylmalate. It functions in the pathway amino-acid biosynthesis; L-leucine biosynthesis; L-leucine from 3-methyl-2-oxobutanoate: step 2/4. Catalyzes the isomerization between 2-isopropylmalate and 3-isopropylmalate, via the formation of 2-isopropylmaleate. The chain is 3-isopropylmalate dehydratase small subunit 1 from Chromobacterium violaceum (strain ATCC 12472 / DSM 30191 / JCM 1249 / CCUG 213 / NBRC 12614 / NCIMB 9131 / NCTC 9757 / MK).